The following is a 494-amino-acid chain: Vacuolar-processing enzyme (494 aa).

The first 20 residues, Met1–Ala20, serve as a signal peptide directing secretion. A glycan (N-linked (GlcNAc...) asparagine) is linked at Asn151. His178 is an active-site residue. Cys220 serves as the catalytic Nucleophile. Cys253 and Cys267 form a disulfide bridge. N-linked (GlcNAc...) asparagine glycosylation occurs at Asn336. Intrachain disulfides connect Cys430–Cys460 and Cys442–Cys477.

This sequence belongs to the peptidase C13 family. In terms of tissue distribution, high levels are seen in the flowers, a lower level expression is seen in the leaves, while very low levels are seen in the stems and roots.

In terms of biological role, asparagine-specific endopeptidase that may be involved in processing of proteins targeted to vacuoles that accumulate during ethylene-regulated processes such as flower opening and flavedo degreening. The sequence is that of Vacuolar-processing enzyme from Citrus sinensis (Sweet orange).